Reading from the N-terminus, the 340-residue chain is tRNA N6-adenosine threonylcarbamoyltransferase (340 aa).

Fe cation is bound by residues His113 and His117. Residues 135–139, Asp169, Gly182, Asp186, and Asn274 contribute to the substrate site; that span reads LVSGG. Asp302 provides a ligand contact to Fe cation.

This sequence belongs to the KAE1 / TsaD family. Fe(2+) is required as a cofactor.

The protein resides in the cytoplasm. The enzyme catalyses L-threonylcarbamoyladenylate + adenosine(37) in tRNA = N(6)-L-threonylcarbamoyladenosine(37) in tRNA + AMP + H(+). In terms of biological role, required for the formation of a threonylcarbamoyl group on adenosine at position 37 (t(6)A37) in tRNAs that read codons beginning with adenine. Is involved in the transfer of the threonylcarbamoyl moiety of threonylcarbamoyl-AMP (TC-AMP) to the N6 group of A37, together with TsaE and TsaB. TsaD likely plays a direct catalytic role in this reaction. This Mycobacterium sp. (strain KMS) protein is tRNA N6-adenosine threonylcarbamoyltransferase.